Consider the following 300-residue polypeptide: 33 kDa chaperonin (300 aa).

2 cysteine pairs are disulfide-bonded: cysteine 235-cysteine 237 and cysteine 269-cysteine 272.

The protein belongs to the HSP33 family. In terms of processing, under oxidizing conditions two disulfide bonds are formed involving the reactive cysteines. Under reducing conditions zinc is bound to the reactive cysteines and the protein is inactive.

The protein localises to the cytoplasm. In terms of biological role, redox regulated molecular chaperone. Protects both thermally unfolding and oxidatively damaged proteins from irreversible aggregation. Plays an important role in the bacterial defense system toward oxidative stress. The chain is 33 kDa chaperonin from Pseudomonas syringae pv. syringae (strain B728a).